The following is a 249-amino-acid chain: 2,3-bisphosphoglycerate-dependent phosphoglycerate mutase (249 aa).

Residues 8 to 15, 21 to 22, R60, 87 to 90, K98, 114 to 115, and 183 to 184 contribute to the substrate site; these read RHGQSVWN, TG, ERHY, RR, and GN. The active-site Tele-phosphohistidine intermediate is the H9. E87 acts as the Proton donor/acceptor in catalysis.

This sequence belongs to the phosphoglycerate mutase family. BPG-dependent PGAM subfamily. As to quaternary structure, homodimer.

The catalysed reaction is (2R)-2-phosphoglycerate = (2R)-3-phosphoglycerate. Its pathway is carbohydrate degradation; glycolysis; pyruvate from D-glyceraldehyde 3-phosphate: step 3/5. Catalyzes the interconversion of 2-phosphoglycerate and 3-phosphoglycerate. The protein is 2,3-bisphosphoglycerate-dependent phosphoglycerate mutase of Solidesulfovibrio magneticus (strain ATCC 700980 / DSM 13731 / RS-1) (Desulfovibrio magneticus).